A 330-amino-acid chain; its full sequence is Ferredoxin--NADP reductase (330 aa).

FAD-binding residues include E35, Q43, Y48, V90, F123, D285, and T326.

The protein belongs to the ferredoxin--NADP reductase type 2 family. As to quaternary structure, homodimer. It depends on FAD as a cofactor.

The catalysed reaction is 2 reduced [2Fe-2S]-[ferredoxin] + NADP(+) + H(+) = 2 oxidized [2Fe-2S]-[ferredoxin] + NADPH. The polypeptide is Ferredoxin--NADP reductase (Streptococcus pyogenes serotype M28 (strain MGAS6180)).